The chain runs to 860 residues: Protein argonaute-2 (860 aa).

The interval 1–30 (MYSGAGPALAPPAPPPPPIQGYAFKPPPRP) is disordered. 3'-nitrotyrosine is present on Y2. Residues 9–30 (LAPPAPPPPPIQGYAFKPPPRP) show a composition bias toward pro residues. Residues 230–349 (PVIEFVCEVL…LPLEVCNIVA (120 aa)) enclose the PAZ domain. The tract at residues 312-317 (YFKDRH) is interaction with guide RNA. S388 is subject to Phosphoserine. The region spanning 518 to 819 (LVVVILPGKT…VAFRARYHLV (302 aa)) is the Piwi domain. The interval 525–567 (GKTPVYAEVKRVGDTVLGMATQCVQMKNVQRTTPQTLSNLWLK) is interaction with guide RNA. The tract at residues 588–591 (FQQP) is interaction with GW182 family members. Position 598 (D598) interacts with a divalent metal cation. Residues 651–661 (LIQFYKSTRFK) form an interaction with GW182 family members region. D670 lines the a divalent metal cation pocket. 4-hydroxyproline is present on P701. Interaction with guide RNA regions lie at residues 710-711 (KR), 754-762 (HAGIQGTSR), and 791-813 (YVRC…VAFR). H808 is an a divalent metal cation binding site. A phosphoserine mark is found at S825, S829, S832, and S835.

Belongs to the argonaute family. Ago subfamily. Interacts with DICER1 through its Piwi domain and with TARBP2 during assembly of the RNA-induced silencing complex (RISC). Together, DICER1, AGO2 and TARBP2 constitute the trimeric RISC loading complex (RLC), or micro-RNA (miRNA) loading complex (miRLC). Within the RLC/miRLC, DICER1 and TARBP2 are required to process precursor miRNAs (pre-miRNAs) to mature miRNAs and then load them onto AGO2. AGO2 bound to the mature miRNA constitutes the minimal RISC and may subsequently dissociate from DICER1 and TARBP2. Note however that the term RISC has also been used to describe the trimeric RLC/miRLC. The formation of RISC complexes containing siRNAs rather than miRNAs appears to occur independently of DICER1. Interacts with AGO1. Also interacts with DDB1, DDX5, DDX6, DDX20, DHX30, DHX36, DDX47, DHX9, ELAVL, FXR1, GEMIN4, HNRNPF, IGF2BP1, ILF3, IMP8, MATR3, PABPC1, PRMT5, P4HA1, P4HB, RBM4, SART3, TNRC6A, TNRC6B, UPF1 and YBX1. Interacts with the P-body components DCP1A and XRN1. Associates with polysomes and messenger ribonucleoproteins (mNRPs). Interacts with RBM4; the interaction is modulated under stress-induced conditions, occurs under both cell proliferation and differentiation conditions and in an RNA- and phosphorylation-independent manner. Interacts with LIMD1, WTIP and AJUBA. Interacts with TRIM71; the interaction increases in presence of RNA. Interacts with APOBEC3G in an RNA-dependent manner. Interacts with APOBEC3A, APOBEC3C, APOBEC3F and APOBEC3H. Interacts with DICER1, TARBP2, EIF6, MOV10 and RPL7A (60S ribosome subunit); they form a large RNA-induced silencing complex (RISC). Interacts with FMR1. Interacts with ZFP36. Interacts with RC3H1; the interaction is RNA independent. Found in a complex composed of AGO2, CHD7 and ARB2A. Interacts with SND1 and SYT11. Interacts with CLNK. Interacts with GARRE1. Interacts with GRB2; this interaction is important for the formation of a ternary complex containing GRB2, AGO2 and DICER1. The cofactor is Mg(2+). It depends on Mn(2+) as a cofactor. In terms of processing, hydroxylated. 4-hydroxylation appears to enhance protein stability but is not required for miRNA-binding or endonuclease activity. Post-translationally, ubiquitinated on surface-exposed lysines by a SCF-like E3 ubiquitin-protein ligase complex containing ZSWIM8 during target-directed microRNA degradation (TDMD), a process that mediates degradation of microRNAs (miRNAs). Ubiquitination by the SCF-like E3 ubiquitin-protein ligase complex containing ZSWIM8 leads to its subsequent degradation, thereby exposing miRNAs for degradation. ZSWIM8 recognizes and binds AGO2 when it is engaged with a TDMD target. Phosphorylation at Ser-388 by AKT3; leads to up-regulate translational repression of microRNA target and down-regulate endonucleolytic cleavage. In terms of processing, a phosphorylation cycle of C-terminal serine cluster (Ser-825-Ser-835) regulates the release of target mRNAs. Target-binding leads to phosphorylation of these residues by CSNK1A1, which reduces the affinity of AGO2 for mRNA and enables target release. The ANKRD52-PPP6C phosphatase complex dephosphorylates the residues, which primes AGO2 for binding a new target.

It is found in the cytoplasm. It localises to the P-body. The protein resides in the nucleus. It carries out the reaction Endonucleolytic cleavage to 5'-phosphomonoester.. In terms of biological role, required for RNA-mediated gene silencing (RNAi) by the RNA-induced silencing complex (RISC). The 'minimal RISC' appears to include AGO2 bound to a short guide RNA such as a microRNA (miRNA) or short interfering RNA (siRNA). These guide RNAs direct RISC to complementary mRNAs that are targets for RISC-mediated gene silencing. The precise mechanism of gene silencing depends on the degree of complementarity between the miRNA or siRNA and its target. Binding of RISC to a perfectly complementary mRNA generally results in silencing due to endonucleolytic cleavage of the mRNA specifically by AGO2. Binding of RISC to a partially complementary mRNA results in silencing through inhibition of translation, and this is independent of endonuclease activity. May inhibit translation initiation by binding to the 7-methylguanosine cap, thereby preventing the recruitment of the translation initiation factor eIF4-E. May also inhibit translation initiation via interaction with EIF6, which itself binds to the 60S ribosomal subunit and prevents its association with the 40S ribosomal subunit. The inhibition of translational initiation leads to the accumulation of the affected mRNA in cytoplasmic processing bodies (P-bodies), where mRNA degradation may subsequently occur. In some cases RISC-mediated translational repression is also observed for miRNAs that perfectly match the 3' untranslated region (3'-UTR). Can also up-regulate the translation of specific mRNAs under certain growth conditions. Binds to the AU element of the 3'-UTR of the TNF (TNF-alpha) mRNA and up-regulates translation under conditions of serum starvation. Also required for transcriptional gene silencing (TGS), in which short RNAs known as antigene RNAs or agRNAs direct the transcriptional repression of complementary promoter regions. In Bos taurus (Bovine), this protein is Protein argonaute-2 (AGO2).